The chain runs to 131 residues: Small ribosomal subunit protein uS12 (131 aa).

Residues 1–22 are disordered; that stretch reads MPTTQQLLRKGRKVLQKKSKVP. The segment covering 9 to 20 has biased composition (basic residues); that stretch reads RKGRKVLQKKSK. Asp-89 is subject to 3-methylthioaspartic acid. A disordered region spans residues 102–131; that stretch reads LDTQGVKDRNKSRSKYGTKKPKAGAAAAKK. Residues 113-131 show a composition bias toward basic residues; sequence SRSKYGTKKPKAGAAAAKK.

Belongs to the universal ribosomal protein uS12 family. In terms of assembly, part of the 30S ribosomal subunit. Contacts proteins S8 and S17. May interact with IF1 in the 30S initiation complex.

In terms of biological role, with S4 and S5 plays an important role in translational accuracy. Interacts with and stabilizes bases of the 16S rRNA that are involved in tRNA selection in the A site and with the mRNA backbone. Located at the interface of the 30S and 50S subunits, it traverses the body of the 30S subunit contacting proteins on the other side and probably holding the rRNA structure together. The combined cluster of proteins S8, S12 and S17 appears to hold together the shoulder and platform of the 30S subunit. The protein is Small ribosomal subunit protein uS12 of Deinococcus radiodurans (strain ATCC 13939 / DSM 20539 / JCM 16871 / CCUG 27074 / LMG 4051 / NBRC 15346 / NCIMB 9279 / VKM B-1422 / R1).